Consider the following 96-residue polypeptide: MDILKEEFEIIKQRIKDKPEGSYVAYLTTADKKTPINKICEKVGEEATETILAAKDQDKQELIYESADLIFHILVLLANNGIEYEELMEEFERRRK.

This sequence belongs to the PRA-PH family.

It localises to the cytoplasm. It carries out the reaction 1-(5-phospho-beta-D-ribosyl)-ATP + H2O = 1-(5-phospho-beta-D-ribosyl)-5'-AMP + diphosphate + H(+). It participates in amino-acid biosynthesis; L-histidine biosynthesis; L-histidine from 5-phospho-alpha-D-ribose 1-diphosphate: step 2/9. This Methanococcus aeolicus (strain ATCC BAA-1280 / DSM 17508 / OCM 812 / Nankai-3) protein is Phosphoribosyl-ATP pyrophosphatase.